Consider the following 259-residue polypeptide: Tonin (259 aa).

An N-terminal signal peptide occupies residues 1–18 (MWLQILSLVLSVGRIDAA). Residues 19-24 (PPGQSR) constitute a propeptide, activation peptide. The Peptidase S1 domain maps to 25–256 (IVGGYKCEKN…FTSWIKKVMK (232 aa)). 5 cysteine pairs are disulfide-bonded: Cys31/Cys171, Cys48/Cys64, Cys150/Cys217, Cys182/Cys196, and Cys207/Cys232. His63 (charge relay system) is an active-site residue. Residue His63 coordinates Zn(2+). Asn106 carries N-linked (GlcNAc...) asparagine glycosylation. Positions 113 and 115 each coordinate Zn(2+). Asp118 functions as the Charge relay system in the catalytic mechanism. Asn189 carries N-linked (GlcNAc...) asparagine glycosylation. Residue Ser211 is the Charge relay system of the active site.

It belongs to the peptidase S1 family. Kallikrein subfamily. As to quaternary structure, monomer. It depends on Zn(2+) as a cofactor. In terms of tissue distribution, found in submaxillary gland.

The enzyme catalyses Preferential cleavage of Arg-|-Xaa bonds in small molecule substrates. Highly selective action to release kallidin (lysyl-bradykinin) from kininogen involves hydrolysis of Met-|-Xaa or Leu-|-Xaa.. Functionally, this protein has both trypsin- and chymotrypsin-like activities, being able to release angiotensin II from angiotensin I or angiotensinogen. The chain is Tonin (Klk2) from Rattus norvegicus (Rat).